The chain runs to 352 residues: Heat-inducible transcription repressor HrcA (352 aa).

This sequence belongs to the HrcA family.

Functionally, negative regulator of class I heat shock genes (grpE-dnaK-dnaJ and groELS operons). Prevents heat-shock induction of these operons. The protein is Heat-inducible transcription repressor HrcA of Ralstonia nicotianae (strain ATCC BAA-1114 / GMI1000) (Ralstonia solanacearum).